The chain runs to 85 residues: MRKNASALKRSRQNLKRKIRNVSVKSELKTIEKRCINMIKAGKKDEAIEFFKFVAKKLDTAARKRIIHKNKAARKKSRLNVLLLK.

The protein belongs to the bacterial ribosomal protein bS20 family.

In terms of biological role, binds directly to 16S ribosomal RNA. The protein is Small ribosomal subunit protein bS20 of Borreliella afzelii (strain PKo) (Borrelia afzelii).